Consider the following 273-residue polypeptide: Nitrogenase iron protein (273 aa).

8 to 15 (GKGGIGKS) contacts ATP. Cys-95 lines the [4Fe-4S] cluster pocket. Residue Arg-98 is modified to ADP-ribosylarginine; by dinitrogenase reductase ADP-ribosyltransferase. Position 130 (Cys-130) interacts with [4Fe-4S] cluster.

The protein belongs to the NifH/BchL/ChlL family. As to quaternary structure, homodimer. [4Fe-4S] cluster is required as a cofactor. Post-translationally, the reversible ADP-ribosylation of Arg-98 inactivates the nitrogenase reductase and regulates nitrogenase activity.

The enzyme catalyses N2 + 8 reduced [2Fe-2S]-[ferredoxin] + 16 ATP + 16 H2O = H2 + 8 oxidized [2Fe-2S]-[ferredoxin] + 2 NH4(+) + 16 ADP + 16 phosphate + 6 H(+). The key enzymatic reactions in nitrogen fixation are catalyzed by the nitrogenase complex, which has 2 components: the iron protein and the molybdenum-iron protein. This is Nitrogenase iron protein from Roseiflexus sp. (strain RS-1).